The chain runs to 651 residues: Acetyl-coenzyme A synthetase (651 aa).

CoA is bound by residues 190–193 (RRGK) and Thr311. Residues 387 to 389 (GEP), 411 to 416 (DTWWQT), Asp508, and Arg523 contribute to the ATP site. CoA is bound at residue Ser531. Arg534 contacts ATP. Val545, His547, and Val550 together coordinate Mg(2+). Lys617 carries the post-translational modification N6-acetyllysine.

Belongs to the ATP-dependent AMP-binding enzyme family. The cofactor is Mg(2+). In terms of processing, acetylated. Deacetylation by the SIR2-homolog deacetylase activates the enzyme.

The enzyme catalyses acetate + ATP + CoA = acetyl-CoA + AMP + diphosphate. In terms of biological role, catalyzes the conversion of acetate into acetyl-CoA (AcCoA), an essential intermediate at the junction of anabolic and catabolic pathways. AcsA undergoes a two-step reaction. In the first half reaction, AcsA combines acetate with ATP to form acetyl-adenylate (AcAMP) intermediate. In the second half reaction, it can then transfer the acetyl group from AcAMP to the sulfhydryl group of CoA, forming the product AcCoA. M.tuberculosis may use AcsA for both acetate and propionate assimilation. This chain is Acetyl-coenzyme A synthetase, found in Mycobacterium tuberculosis (strain CDC 1551 / Oshkosh).